The sequence spans 327 residues: Immunodominant envelope protein p35 (327 aa).

The tract at residues 41–69 is disordered; that stretch reads KNGYDDYRDPPSPKPLPKSKQEPNADDKV. Over residues 59-69 the composition is skewed to basic and acidic residues; the sequence is SKQEPNADDKV. The helical transmembrane segment at 291–311 threads the bilayer; the sequence is ITMMFLIAIVIIIGLAIFDIN.

This sequence belongs to the poxviruses protein p35 family.

The protein localises to the virion membrane. In terms of biological role, envelope protein that binds to the cell surface to provide virion attachment to target cell. This is Immunodominant envelope protein p35 from Fowlpox virus (strain NVSL) (FPV).